Consider the following 362-residue polypeptide: 3-dehydroquinate synthase (362 aa).

NAD(+) contacts are provided by residues 71-76 (DGEQYK), 105-109 (GVIGD), 129-130 (TT), lysine 142, lysine 151, and 169-172 (CLKT). The Zn(2+) site is built by glutamate 184, histidine 247, and histidine 264.

It belongs to the sugar phosphate cyclases superfamily. Dehydroquinate synthase family. Requires NAD(+) as cofactor. The cofactor is Co(2+). Zn(2+) is required as a cofactor.

It is found in the cytoplasm. The enzyme catalyses 7-phospho-2-dehydro-3-deoxy-D-arabino-heptonate = 3-dehydroquinate + phosphate. The protein operates within metabolic intermediate biosynthesis; chorismate biosynthesis; chorismate from D-erythrose 4-phosphate and phosphoenolpyruvate: step 2/7. Functionally, catalyzes the conversion of 3-deoxy-D-arabino-heptulosonate 7-phosphate (DAHP) to dehydroquinate (DHQ). In Salmonella typhi, this protein is 3-dehydroquinate synthase.